The following is a 66-amino-acid chain: Large ribosomal subunit protein bL33c (66 aa).

Belongs to the bacterial ribosomal protein bL33 family.

The protein localises to the plastid. It is found in the chloroplast. This is Large ribosomal subunit protein bL33c from Cryptomeria japonica (Japanese cedar).